Consider the following 907-residue polypeptide: Protein translocase subunit SecA (907 aa).

Residues Gln87, 105–109, and Asp512 each bind ATP; that span reads GEGKT. The tract at residues 869–897 is disordered; that stretch reads AESLSAHTPVVREGEKVGRNDPCPCGSGR. Residues 878-887 show a composition bias toward basic and acidic residues; sequence VVREGEKVGR. Zn(2+) is bound by residues Cys891, Cys893, Cys902, and His903.

Belongs to the SecA family. Monomer and homodimer. Part of the essential Sec protein translocation apparatus which comprises SecA, SecYEG and auxiliary proteins SecDF-YajC and YidC. Zn(2+) serves as cofactor.

The protein resides in the cell inner membrane. The protein localises to the cytoplasm. The catalysed reaction is ATP + H2O + cellular proteinSide 1 = ADP + phosphate + cellular proteinSide 2.. Part of the Sec protein translocase complex. Interacts with the SecYEG preprotein conducting channel. Has a central role in coupling the hydrolysis of ATP to the transfer of proteins into and across the cell membrane, serving both as a receptor for the preprotein-SecB complex and as an ATP-driven molecular motor driving the stepwise translocation of polypeptide chains across the membrane. The chain is Protein translocase subunit SecA from Shewanella sediminis (strain HAW-EB3).